We begin with the raw amino-acid sequence, 203 residues long: DNA-directed RNA polymerase subunit gamma (203 aa).

Residues cysteine 34, cysteine 36, cysteine 49, and cysteine 52 each coordinate Zn(2+).

This sequence belongs to the RNA polymerase beta' chain family. RpoC1 subfamily. As to quaternary structure, in cyanobacteria the RNAP catalytic core is composed of 2 alpha, 1 beta, 1 beta', 1 gamma and 1 omega subunit. When a sigma factor is associated with the core the holoenzyme is formed, which can initiate transcription. Zn(2+) serves as cofactor.

It catalyses the reaction RNA(n) + a ribonucleoside 5'-triphosphate = RNA(n+1) + diphosphate. Its function is as follows. DNA-dependent RNA polymerase catalyzes the transcription of DNA into RNA using the four ribonucleoside triphosphates as substrates. The polypeptide is DNA-directed RNA polymerase subunit gamma (rpoC1) (Fischerella muscicola).